The sequence spans 908 residues: WD repeat-containing protein 44 (908 aa).

The interval 1–163 (MMPLKMCTWG…SSADQLDASK (163 aa)) is binding activity. Phosphoserine is present on residues S17, S40, S61, S71, S86, and S116. 2 stretches are compositionally biased toward polar residues: residues 108–120 (QQGSRKADSQNAA) and 148–157 (NNLTEVSSAD). Disordered stretches follow at residues 108-158 (QQGS…SADQ), 202-273 (APAK…KDNI), 309-341 (TAQENGKAPDVQTVAGEVMGPQRPRSNSGRELT), 391-418 (VSNDATQSDDEEKLQSQQTDTDGGRLKQ), and 454-474 (DEVFHTDQDDPSSSDDEGMPY). Residues T151 and T211 each carry the phosphothreonine modification. The important for interaction with ARHGAP26 AND ARHGAP10 stretch occupies residues 203 to 249 (PAKPPRHLTPEPDIVASTKKPVPARPPPPTNFPPPRPPPPSRPAPPP). Positions 225-248 (PARPPPPTNFPPPRPPPPSRPAPP) are enriched in pro residues. S254 bears the Phosphoserine mark. Residues 254–270 (SDLEFEALKTPDLDVPK) are compositionally biased toward basic and acidic residues. At T263 the chain carries Phosphothreonine. An important for interaction with RAB11A region spans residues 326-339 (VMGPQRPRSNSGRE). 2 positions are modified to phosphoserine: S334 and S336. Phosphothreonine occurs at positions 341 and 396. A phosphoserine mark is found at S398, S465, S466, and S467. The span at 462 to 471 (DDPSSSDDEG) shows a compositional bias: acidic residues. Phosphotyrosine is present on Y474. One copy of the WD 1 repeat lies at 504 to 543 (EHMGAVWTMKFSHCGRLLASAGQDNIVRIWALKNAFDYFN). A disordered region spans residues 552 to 587 (EGRVSPSPSQESLSSSKSDTDMGVCSGTDEDPDDKN). A phosphoserine mark is found at S556 and S560. Positions 556-568 (SPSPSQESLSSSK) are enriched in low complexity. 5 WD repeats span residues 600–638 (GHTADLLDLSWSKNYFLLSSSMDKTVRLWHISRRECLCC), 640–680 (QHID…VALW), 685–724 (GQTKLITAANFCQNGKYAVIGTYDGRCIFYDTEHLKYHTQ), 735–774 (KVGRKITGIEPLPGENKILVTSNDSRIRLYDLRDLSLSMK), and 779–818 (VNSSSQIKASFSHDFTYLVSGSEDKYVYIWSTYHDLSKFT).

As to quaternary structure, interacts preferentially with the GTP-bound form of RAB11 when membrane-associated. Interacts with GRAF1/ARHGAP26 or GRAF2/ARHGAP10; the interaction connects the endoplasmic reticulum (ER) with the endosomal tubule. Interacts with VAPA (via MSP domain) or VAPB (via MSP domain); the interaction connects the ER with the endosomal tubule. Does not bind to other Rab and Rho small G proteins. Phosphorylated by ATK1; the phosphorylation stabilizes its interaction with RAB11A and RAB11B. Expressed in heart; brain; spleen; lung; liver; muscle and kidney.

Its subcellular location is the cytoplasm. It localises to the cytosol. The protein localises to the perinuclear region. The protein resides in the endosome membrane. It is found in the golgi apparatus. Its subcellular location is the trans-Golgi network. In terms of biological role, downstream effector for Rab11 which regulates Rab11 intracellular membrane trafficking functions such as endocytic recycling, intracellular ciliogenesis and protein export. ATK1-mediated phosphorylation of WDR44 induces binding to Rab11 which activates endocytic recycling of transferrin receptor back to the plasma membrane. When bound to Rab11, prevents the formation of the ciliogenic Rab11-Rabin8/RAB3IP-RAB11FIP3 complex, therefore inhibiting preciliary trafficking and ciliogenesis. May participate in neo-synthesized protein export by connecting the endoplasmic reticulum (ER) with the endosomal tubule via direct interactions with the integral ER proteins VAPA or VAPB and the endosomal protein GRAFs (GRAF1/ARHGAP26 or GRAF2/ARHGAP10), which facilitates the transfer of proteins such as E-cadherin, MPP14 and CFTR into a Rab8-Rab10-Rab11-dependent export route. In Rattus norvegicus (Rat), this protein is WD repeat-containing protein 44.